Reading from the N-terminus, the 741-residue chain is Zinc metalloproteinase nas-30 (741 aa).

2 stretches are compositionally biased toward low complexity: residues 71–85 (KPAP…APAP) and 97–118 (PAPK…DAPP). A disordered region spans residues 71–122 (KPAPAAAGPRSAPAPTNEDYNTDIDVPAPKAKARAAPTPRRAQADAPPVYRQ). Positions 324 to 516 (KVITGSVYRW…VKQVNRLYCN (193 aa)) constitute a Peptidase M12A domain. Disulfide bonds link Cys364–Cys515, Cys385–Cys404, Cys519–Cys539, Cys541–Cys550, Cys562–Cys583, and Cys610–Cys630. His412 is a binding site for Zn(2+). Glu413 is a catalytic residue. Zn(2+) contacts are provided by His416 and His422. The EGF-like domain occupies 539–550 (CKCPDGLGGKLC). The 99-residue stretch at 550–648 (CGRAAKGTDH…ISDQSEALIL (99 aa)) folds into the CUB domain. The N-linked (GlcNAc...) asparagine glycan is linked to Asn633.

The cofactor is Zn(2+).

Its function is as follows. Metalloprotease. This Caenorhabditis elegans protein is Zinc metalloproteinase nas-30.